The following is a 168-amino-acid chain: RNA pyrophosphohydrolase (168 aa).

One can recognise a Nudix hydrolase domain in the interval 8 to 159 (PYRTCVGVML…KRPVYERVVK (152 aa)). Positions 47–68 (GGVDPGEDTWKAAKRELYEETS) match the Nudix box motif.

The protein belongs to the Nudix hydrolase family. RppH subfamily. A divalent metal cation serves as cofactor.

Functionally, accelerates the degradation of transcripts by removing pyrophosphate from the 5'-end of triphosphorylated RNA, leading to a more labile monophosphorylated state that can stimulate subsequent ribonuclease cleavage. The chain is RNA pyrophosphohydrolase from Rhodopseudomonas palustris (strain ATCC BAA-98 / CGA009).